A 240-amino-acid chain; its full sequence is Thymidylate kinase (240 aa).

Residue 10–17 (GINGVGKS) participates in ATP binding.

It belongs to the thymidylate kinase family.

The catalysed reaction is dTMP + ATP = dTDP + ADP. It functions in the pathway pyrimidine metabolism; dTTP biosynthesis. Its function is as follows. Catalyzes the conversion of dTMP to dTDP. The chain is Thymidylate kinase (TMK) from African swine fever virus (strain Badajoz 1971 Vero-adapted) (Ba71V).